We begin with the raw amino-acid sequence, 215 residues long: Putative serine/threonine-protein kinase YrzF (215 aa).

Residues 27-215 (SEELTLIGKG…HFAQRKRKYS (189 aa)) enclose the Protein kinase domain. ATP is bound by residues 33–41 (IGKGRSAYV) and Lys54. Asp135 functions as the Proton acceptor in the catalytic mechanism.

It belongs to the protein kinase superfamily. Ser/Thr protein kinase family.

The catalysed reaction is L-seryl-[protein] + ATP = O-phospho-L-seryl-[protein] + ADP + H(+). It carries out the reaction L-threonyl-[protein] + ATP = O-phospho-L-threonyl-[protein] + ADP + H(+). This Bacillus subtilis (strain 168) protein is Putative serine/threonine-protein kinase YrzF (yrzF).